A 317-amino-acid polypeptide reads, in one-letter code: Alkylsulfatase (317 aa).

His-78 contacts substrate. Fe cation is bound by residues His-105 and Asp-107. Residue Val-108 participates in substrate binding. Residue Thr-132 coordinates 2-oxoglutarate. His-261 contributes to the Fe cation binding site. The 2-oxoglutarate site is built by Arg-272 and Arg-276.

Belongs to the TfdA dioxygenase family. Homotetramer. Requires Fe(2+) as cofactor.

In terms of biological role, alpha-ketoglutarate-dependent dioxygenase that in vitro catalyzes the oxygenolytic release of sulfite from hexylsulfate. The protein is Alkylsulfatase of Acinetobacter baylyi (strain ATCC 33305 / BD413 / ADP1).